Here is a 301-residue protein sequence, read N- to C-terminus: Probable alpha-L-glutamate ligase (301 aa).

The region spanning 104–287 is the ATP-grasp domain; that stretch reads LQLLSRKGIG…VAGLIYEFIE (184 aa). Residues K141, 178 to 179, D187, and 211 to 213 contribute to the ATP site; these read EF and RSN. Mg(2+) is bound by residues D248, E260, and N262. Mn(2+) contacts are provided by D248, E260, and N262.

It belongs to the RimK family. Mg(2+) is required as a cofactor. Mn(2+) serves as cofactor.

The sequence is that of Probable alpha-L-glutamate ligase from Shewanella loihica (strain ATCC BAA-1088 / PV-4).